Consider the following 229-residue polypeptide: Lantibiotic transport ATP-binding protein SrtF (229 aa).

Positions 2–225 (LKIQNLKKSY…EELFNNQILF (224 aa)) constitute an ABC transporter domain. 34–41 (GPNGAGKS) provides a ligand contact to ATP.

Belongs to the ABC transporter superfamily.

Its function is as follows. Implicated in the export process of the lantibiotic SrtA. The polypeptide is Lantibiotic transport ATP-binding protein SrtF (srtF) (Streptococcus pyogenes serotype M1).